We begin with the raw amino-acid sequence, 234 residues long: Glucosamine-6-phosphate deaminase (234 aa).

The Proton acceptor; for enolization step role is filled by Asp62. Asn128 (for ring-opening step) is an active-site residue. His130 acts as the Proton acceptor; for ring-opening step in catalysis. Residue Glu135 is the For ring-opening step of the active site.

It belongs to the glucosamine/galactosamine-6-phosphate isomerase family. NagB subfamily.

The enzyme catalyses alpha-D-glucosamine 6-phosphate + H2O = beta-D-fructose 6-phosphate + NH4(+). Its pathway is amino-sugar metabolism; N-acetylneuraminate degradation; D-fructose 6-phosphate from N-acetylneuraminate: step 5/5. In terms of biological role, catalyzes the reversible isomerization-deamination of glucosamine 6-phosphate (GlcN6P) to form fructose 6-phosphate (Fru6P) and ammonium ion. The chain is Glucosamine-6-phosphate deaminase from Streptococcus pyogenes serotype M1.